The following is a 153-amino-acid chain: NADH dehydrogenase [ubiquinone] 1 beta subcomplex subunit 11, mitochondrial (153 aa).

The N-terminal 29 residues, 1 to 29, are a transit peptide targeting the mitochondrion; sequence MAAGLFGLSARRLLAAAATRGLPAARVRW. The tract at residues 40–76 is disordered; it reads PSAVAGKRPPEPTTPWQEDPEPEDENLYEKNPDSHGY. A compositionally biased stretch (basic and acidic residues) spans 66–76; the sequence is LYEKNPDSHGY. Residues 89 to 109 traverse the membrane as a helical segment; sequence LVFFFGVSIILVLGSTFVAYL.

The protein belongs to the complex I NDUFB11 subunit family. Complex I is composed of 45 different subunits. Interacts with BCAP31. In terms of tissue distribution, ubiquitous.

The protein localises to the mitochondrion inner membrane. Accessory subunit of the mitochondrial membrane respiratory chain NADH dehydrogenase (Complex I), that is believed not to be involved in catalysis. Complex I functions in the transfer of electrons from NADH to the respiratory chain. The immediate electron acceptor for the enzyme is believed to be ubiquinone. The chain is NADH dehydrogenase [ubiquinone] 1 beta subcomplex subunit 11, mitochondrial (NDUFB11) from Homo sapiens (Human).